The following is a 749-amino-acid chain: Phosphate-regulating neutral endopeptidase PHEX (749 aa).

At 1–20 (MEAETGSSVETGKKANRGTR) the chain is on the cytoplasmic side. The helical; Signal-anchor for type II membrane protein transmembrane segment at 21–41 (IALVVFVGGTLVLGTILFLVS) threads the bilayer. Residues 42-641 (QGLLSLQAKQ…LNVKGKRTLG (600 aa)) are Extracellular-facing. Residues 53-749 (YCLKPECIEA…NRGMDSCRLW (697 aa)) enclose the Peptidase M13 domain. A disulfide bridge connects residues cysteine 54 and cysteine 59. 7 N-linked (GlcNAc...) asparagine glycosylation sites follow: asparagine 71, asparagine 238, asparagine 263, asparagine 290, asparagine 301, asparagine 377, and asparagine 484. 4 disulfides stabilise this stretch: cysteine 77–cysteine 733, cysteine 85–cysteine 693, cysteine 142–cysteine 406, and cysteine 617–cysteine 746. Histidine 580 is a Zn(2+) binding site. The active site involves glutamate 581. Residues histidine 584 and glutamate 642 each coordinate Zn(2+). Aspartate 646 functions as the Proton donor in the catalytic mechanism. N-linked (GlcNAc...) asparagine glycosylation is present at asparagine 736.

Belongs to the peptidase M13 family. In terms of assembly, interacts with MEPE; the interaction is zinc-dependent (via ASARM motif). The cofactor is Zn(2+). As to expression, specifically expressed in ovary. Expressed at low levels in kidney.

Its subcellular location is the cell membrane. Peptidase that cleaves SIBLING (small integrin-binding ligand, N-linked glycoprotein)-derived ASARM peptides, thus regulating their biological activity. Cleaves ASARM peptides between Ser and Glu or Asp residues. Regulates osteogenic cell differentiation and bone mineralization through the cleavage of the MEPE-derived ASARM peptide. Promotes dentin mineralization and renal phosphate reabsorption by cleaving DMP1- and MEPE-derived ASARM peptides. Inhibits the cleavage of MEPE by CTSB/cathepsin B thus preventing MEPE degradation. The chain is Phosphate-regulating neutral endopeptidase PHEX (PHEX) from Homo sapiens (Human).